We begin with the raw amino-acid sequence, 525 residues long: Mitogen-activated protein kinase kinase 5 (525 aa).

In terms of domain architecture, Protein kinase spans 59 to 317 (ETEGGFLGKG…CTELLRHPFI (259 aa)). ATP-binding positions include 65–73 (LGKGSSGSV) and lysine 88. Aspartate 178 (proton acceptor) is an active-site residue. A compositionally biased stretch (low complexity) spans 358 to 367 (SALPLASEGG). Disordered regions lie at residues 358 to 392 (SALPLASEGGTPKATSPSPAPVSPLTLSCPLERHD) and 438 to 468 (SASVATDSGEGGGAAGVSAASLDNGQAAQHR).

This sequence belongs to the protein kinase superfamily. STE Ser/Thr protein kinase family. MAP kinase kinase subfamily. Mg(2+) is required as a cofactor.

It catalyses the reaction L-tyrosyl-[protein] + ATP = O-phospho-L-tyrosyl-[protein] + ADP + H(+). It carries out the reaction L-seryl-[protein] + ATP = O-phospho-L-seryl-[protein] + ADP + H(+). The catalysed reaction is L-threonyl-[protein] + ATP = O-phospho-L-threonyl-[protein] + ADP + H(+). Functionally, protein kinase which phosphorylates and activates MPK4 in vitro. This Leishmania mexicana protein is Mitogen-activated protein kinase kinase 5.